The primary structure comprises 355 residues: Serum paraoxonase/arylesterase 1 (355 aa).

Cys42 and Cys353 are disulfide-bonded. Ca(2+) is bound by residues Glu53 and Asp54. His115 functions as the Proton acceptor in the catalytic mechanism. Ca(2+)-binding residues include Ile117, Asn168, Asp169, and Asn224. Asn253 is a glycosylation site (N-linked (GlcNAc...) asparagine). Residues Asp269 and Asn270 each coordinate Ca(2+). Asn270 and Asn324 each carry an N-linked (GlcNAc...) asparagine glycan.

The protein belongs to the paraoxonase family. In terms of assembly, homodimer. Interacts with CLU. Ca(2+) serves as cofactor. In terms of processing, glycosylated. The signal sequence is not cleaved. In terms of tissue distribution, plasma. Associated with HDL.

The protein resides in the secreted. It is found in the extracellular space. It catalyses the reaction a phenyl acetate + H2O = a phenol + acetate + H(+). The catalysed reaction is An aryl dialkyl phosphate + H2O = dialkyl phosphate + an aryl alcohol.. It carries out the reaction an N-acyl-L-homoserine lactone + H2O = an N-acyl-L-homoserine + H(+). Hydrolyzes the toxic metabolites of a variety of organophosphorus insecticides. Capable of hydrolyzing a broad spectrum of organophosphate substrates and lactones, and a number of aromatic carboxylic acid esters. Mediates an enzymatic protection of low density lipoproteins against oxidative modification. The protein is Serum paraoxonase/arylesterase 1 (Pon1) of Rattus norvegicus (Rat).